Here is a 205-residue protein sequence, read N- to C-terminus: MSKRESAKYKIDRRLGENIWGRPKSPVNRREYGPGQHGQRRKGKLSDFGVQLRAKQKLKGFYGDISEKQFRKTYEEAARRKGDTGENLIGLLESRLDAVVYRAKFVPTIFAARQFINHGHVNVNGRRVNIQSYRLKVGDVVEVREKSKQLAIVLEAVQLAERDVPDYIDVDHNKMVATYNRVPGLSDVPYAVQMEPNLVVEFYSR.

The interval 19–45 (IWGRPKSPVNRREYGPGQHGQRRKGKL) is disordered. Residues 94–157 (SRLDAVVYRA…KQLAIVLEAV (64 aa)) enclose the S4 RNA-binding domain.

It belongs to the universal ribosomal protein uS4 family. In terms of assembly, part of the 30S ribosomal subunit. Contacts protein S5. The interaction surface between S4 and S5 is involved in control of translational fidelity.

One of the primary rRNA binding proteins, it binds directly to 16S rRNA where it nucleates assembly of the body of the 30S subunit. Its function is as follows. With S5 and S12 plays an important role in translational accuracy. The protein is Small ribosomal subunit protein uS4 of Brucella melitensis biotype 2 (strain ATCC 23457).